The sequence spans 1226 residues: AF4/FMR2 family member 3 (1226 aa).

Over residues 24 to 37 (RNALRRKERERRNQ) the composition is skewed to basic and acidic residues. Disordered stretches follow at residues 24–65 (RNAL…GDEL), 116–164 (SRAQ…RATQ), 197–299 (ERPP…GETN), 323–496 (KVEP…SNQY), and 523–728 (IKST…SINA). Residues 42 to 52 (DDGTFNSSYSL) show a composition bias toward polar residues. Over residues 123–132 (SSICSTTTST) the composition is skewed to low complexity. Polar residues-rich tracts occupy residues 251–261 (LKSSSETSVHC) and 334–344 (KDSQLVSSGHN). The span at 381-392 (QQAAQRTALRAL) shows a compositional bias: low complexity. A compositionally biased stretch (polar residues) spans 396-408 (AVVQQPNCRTSVP). Low complexity predominate over residues 409–445 (SSKGSSSSSSSGSSSSSSDSESSSGSDSETESSSSES). Positions 485–496 (QNESHGSESNQY) are enriched in polar residues. Residues 523 to 533 (IKSTCKEEQRP) show a composition bias toward basic and acidic residues. Composition is skewed to low complexity over residues 550–561 (PPAAVAVAVSAA) and 569–579 (CAPAENAPAPA). Over residues 589-607 (RRTERTSAGDGANCHRPEE) the composition is skewed to basic and acidic residues. The span at 668–678 (TESSSSSSSSD) shows a compositional bias: low complexity. Polar residues predominate over residues 692 to 705 (KAQTVAASASSGND). Phosphoserine is present on S755. Disordered stretches follow at residues 783-856 (PQEP…LSAN), 879-964 (PISP…RDCK), and 1100-1138 (AAQA…SLSN). Basic and acidic residues predominate over residues 830-842 (REIKKSQGEKDSS). The span at 843 to 856 (SRLATSTSNTLSAN) shows a compositional bias: polar residues. S881 is subject to Phosphoserine. Positions 894 to 909 (EDLTSSSRPNGNSLFT) are enriched in polar residues.

The protein belongs to the AF4 family. In terms of tissue distribution, preferentially expressed in lymphoid tissues, highest levels being found in the thymus.

It is found in the nucleus. Putative transcription activator that may function in lymphoid development and oncogenesis. Binds, in vitro, to double-stranded DNA. This Homo sapiens (Human) protein is AF4/FMR2 family member 3.